The chain runs to 174 residues: Large ribosomal subunit protein uL10 (174 aa).

The protein belongs to the universal ribosomal protein uL10 family. In terms of assembly, part of the ribosomal stalk of the 50S ribosomal subunit. The N-terminus interacts with L11 and the large rRNA to form the base of the stalk. The C-terminus forms an elongated spine to which L12 dimers bind in a sequential fashion forming a multimeric L10(L12)X complex.

In terms of biological role, forms part of the ribosomal stalk, playing a central role in the interaction of the ribosome with GTP-bound translation factors. The polypeptide is Large ribosomal subunit protein uL10 (Coxiella burnetii (strain CbuK_Q154) (Coxiella burnetii (strain Q154))).